The following is a 377-amino-acid chain: tRNA-specific 2-thiouridylase MnmA (377 aa).

Residues 8 to 15 (GMSGGVDS) and M34 each bind ATP. The interaction with target base in tRNA stretch occupies residues 94 to 96 (NPD). C99 functions as the Nucleophile in the catalytic mechanism. Residues C99 and C201 are joined by a disulfide bond. G123 lines the ATP pocket. An interaction with tRNA region spans residues 151–153 (KDQ). C201 functions as the Cysteine persulfide intermediate in the catalytic mechanism. Residues 315–316 (RY) are interaction with tRNA.

Belongs to the MnmA/TRMU family.

The protein localises to the cytoplasm. The catalysed reaction is S-sulfanyl-L-cysteinyl-[protein] + uridine(34) in tRNA + AH2 + ATP = 2-thiouridine(34) in tRNA + L-cysteinyl-[protein] + A + AMP + diphosphate + H(+). Catalyzes the 2-thiolation of uridine at the wobble position (U34) of tRNA, leading to the formation of s(2)U34. This Acinetobacter baumannii (strain ACICU) protein is tRNA-specific 2-thiouridylase MnmA.